Consider the following 251-residue polypeptide: ATP synthase delta chain, chloroplastic (251 aa).

A chloroplast-targeting transit peptide spans 1–64 (MASLQHTTAS…STGGALGARM (64 aa)).

Belongs to the ATPase delta chain family. As to quaternary structure, F-type ATPases have 2 components, CF(1) - the catalytic core - and CF(0) - the membrane proton channel. CF(1) has five subunits: alpha(3), beta(3), gamma(1), delta(1), epsilon(1). CF(0) has three main subunits: a, b and c.

The protein localises to the plastid. The protein resides in the chloroplast thylakoid membrane. Functionally, this protein seems to be part of the stalk that links CF(0) to CF(1). It either transmits conformational changes from CF(0) into CF(1) or is implicated in proton conduction. This is ATP synthase delta chain, chloroplastic (ATPD) from Pisum sativum (Garden pea).